The primary structure comprises 278 residues: Bifunctional protein FolD (278 aa).

NADP(+) contacts are provided by residues 165–167, Ser-190, and Thr-231; that span reads GRS.

This sequence belongs to the tetrahydrofolate dehydrogenase/cyclohydrolase family. Homodimer.

The enzyme catalyses (6R)-5,10-methylene-5,6,7,8-tetrahydrofolate + NADP(+) = (6R)-5,10-methenyltetrahydrofolate + NADPH. It carries out the reaction (6R)-5,10-methenyltetrahydrofolate + H2O = (6R)-10-formyltetrahydrofolate + H(+). Its pathway is one-carbon metabolism; tetrahydrofolate interconversion. Catalyzes the oxidation of 5,10-methylenetetrahydrofolate to 5,10-methenyltetrahydrofolate and then the hydrolysis of 5,10-methenyltetrahydrofolate to 10-formyltetrahydrofolate. The protein is Bifunctional protein FolD of Clostridium novyi (strain NT).